The chain runs to 163 residues: Sorting nexin-3 (163 aa).

The tract at residues 1-20 is disordered; it reads MASDQDNSGLDAPGSQFHRP. Positions 42 to 159 constitute a PX domain; sequence NFLEIEVRNP…AAFVQDPNWD (118 aa). 5 residues coordinate a 1,2-diacyl-sn-glycero-3-phospho-(1D-myo-inositol-3-phosphate): R85, S87, K111, R116, and R125.

This sequence belongs to the sorting nexin family.

It is found in the cytoplasm. It localises to the golgi apparatus membrane. The protein resides in the prevacuolar compartment membrane. Required for retention of late Golgi membrane proteins. Component of the retrieval machinery that functions by direct interaction with the cytosolic tails of certain TGN membrane proteins during the sorting/budding process at the prevacuolar compartment. Binds phosphatidylinositol 3-phosphate (PtdIns(P3)). The protein is Sorting nexin-3 (SNX3) of Gibberella zeae (strain ATCC MYA-4620 / CBS 123657 / FGSC 9075 / NRRL 31084 / PH-1) (Wheat head blight fungus).